The sequence spans 158 residues: Large ribosomal subunit protein bL35m (158 aa).

It belongs to the bacterial ribosomal protein bL35 family.

The protein localises to the mitochondrion. The sequence is that of Large ribosomal subunit protein bL35m (mrpl-35) from Caenorhabditis elegans.